A 102-amino-acid chain; its full sequence is Large ribosomal subunit protein bL21 (102 aa).

Belongs to the bacterial ribosomal protein bL21 family. As to quaternary structure, part of the 50S ribosomal subunit. Contacts protein L20.

In terms of biological role, this protein binds to 23S rRNA in the presence of protein L20. This Bacillus cytotoxicus (strain DSM 22905 / CIP 110041 / 391-98 / NVH 391-98) protein is Large ribosomal subunit protein bL21.